Consider the following 206-residue polypeptide: Small ribosomal subunit protein uS4 (206 aa).

Residues Gly-96–Lys-156 form the S4 RNA-binding domain.

This sequence belongs to the universal ribosomal protein uS4 family. Part of the 30S ribosomal subunit. Contacts protein S5. The interaction surface between S4 and S5 is involved in control of translational fidelity.

Functionally, one of the primary rRNA binding proteins, it binds directly to 16S rRNA where it nucleates assembly of the body of the 30S subunit. In terms of biological role, with S5 and S12 plays an important role in translational accuracy. The sequence is that of Small ribosomal subunit protein uS4 from Shigella flexneri.